A 478-amino-acid chain; its full sequence is Zinc finger C3HC-type protein 1-like (478 aa).

Residues 93–147 form a C3HC-type zinc finger; it reads CAKYGWSNIECDMLKCSSCNAYLCASLQPVLDFSKYKQRCVELQEALRKAHEKFC. Residues 285-389 form a disordered region; it reads LSAPNTPVSP…SSSSDTSPRG (105 aa). Residues 351–363 show a composition bias toward polar residues; it reads SMGQGESSGLSNE. Positions 377–388 are enriched in low complexity; it reads LCSSSSSDTSPR.

Post-translationally, phosphorylated. May also be weakly phosphorylated on Tyr residues.

It is found in the nucleus. The protein localises to the nucleus envelope. In terms of biological role, required for proper positioning of a substantial amount of TPR at the nuclear basket (NB) through interaction with TPR. This is Zinc finger C3HC-type protein 1-like (zc3hc1) from Xenopus tropicalis (Western clawed frog).